Reading from the N-terminus, the 396-residue chain is MNIIIIILYISYIYTYPFSNGKYCNLYNPTTFYKINNILYSIKIYNINNNTNNTNNNNPADSSSYESRMRAAGNSNSNSNSNSDSNINNTNNINNTNNIYNINNNINNNNNINNNYINNSIPCGSYPQGRWTAGSEFYKMLFVGLFDSNGNIQINKYKSKYLQFRLIIKLNNNKENINILNNIKHYLKGNININNNYVIWIINDIKNINNLIKLFNKYPLITINKKLQLAFIKSIYYIYKNNRNLAINLYLKDRNNKYNPNLYKYYKDINYTKINYFSPANFHKKFAGININININNNYNHNYINVWFLGFIENKGKFIIRKNNNNSFLFYINDKHLIEFLKNYFNIKNKLIYKNNIYILEVYNKYYINIFIKFFNKYNLQGYKYIEYIKWKKINI.

The tract at residues 51–90 (TNNTNNNNPADSSSYESRMRAAGNSNSNSNSNSDSNINNT) is disordered. A compositionally biased stretch (low complexity) spans 74-90 (NSNSNSNSNSDSNINNT).

The protein belongs to the LAGLIDADG endonuclease family.

It localises to the mitochondrion. Its function is as follows. Mitochondrial DNA endonuclease involved in intron homing. This chain is Probable intron-encoded endonuclease aI3 (aI3), found in Kluyveromyces lactis (strain ATCC 8585 / CBS 2359 / DSM 70799 / NBRC 1267 / NRRL Y-1140 / WM37) (Yeast).